Consider the following 32-residue polypeptide: GTATCETQRLANFLAPSSNKLGAIFSPTKMGS.

This sequence belongs to the calcitonin family. As to quaternary structure, can form homodimers. Interacts with IDE and INS. Interaction with INS inhibits homodimerization and fibril formation.

Its subcellular location is the secreted. Functionally, amylin/IAPP is a glucoregulatory peptide hormone that plays an important role in the regulation of energy homeostasis. Selectively inhibits insulin-stimulated glucose utilization and glycogen deposition in muscle, while not affecting adipocyte glucose metabolism. IAPP function is mediated by the CALCR-RAMPs (AMYRs) receptor complexes. Amylin can also bind CALCR receptor in the absence of RAMPs, although it is more selective for AMYRs. In Ovis aries (Sheep), this protein is Islet amyloid polypeptide (IAPP).